A 592-amino-acid polypeptide reads, in one-letter code: Aspartate--tRNA ligase (592 aa).

Residue Glu173 participates in L-aspartate binding. The aspartate stretch occupies residues 197 to 200 (QLFK). Arg219 contacts L-aspartate. ATP contacts are provided by residues 219–221 (RDE) and Gln228. L-aspartate is bound at residue His448. Glu482 is a binding site for ATP. Residue Arg489 coordinates L-aspartate. Residue 534-537 (GLDR) participates in ATP binding.

It belongs to the class-II aminoacyl-tRNA synthetase family. Type 1 subfamily. Homodimer.

It is found in the cytoplasm. It catalyses the reaction tRNA(Asp) + L-aspartate + ATP = L-aspartyl-tRNA(Asp) + AMP + diphosphate. Its function is as follows. Catalyzes the attachment of L-aspartate to tRNA(Asp) in a two-step reaction: L-aspartate is first activated by ATP to form Asp-AMP and then transferred to the acceptor end of tRNA(Asp). This chain is Aspartate--tRNA ligase, found in Shewanella putrefaciens (strain CN-32 / ATCC BAA-453).